The primary structure comprises 496 residues: MATSNKNMLLNYVPVYVMLPLGVINVNNVFEDPDGLKEQLVQLRAAGVDGVMIDVWWGIIEQKGPKEYDWSAYKSLFQLVQKCGLKLQAIMSFHQCGGNVGDVVNIPLPKWVLDIGESDPDIFYTNRSGIRNQEYLSIGVDNKPIFHGRTAIEIYSDYMKSFRENMSDLLKSEVIIDIEVGLGPAGELRYPSYPQNQGWQFPGIGEFQCYDKYLRESFKAAAAKAGHSEWELPDDAGTYNDVPESTEFFKTNGTYLTEKGKFFLTWYSNQLLNHGDQILDEANKAFLGCKVKLAIKVSGIHWWYKAPNHAAELTAGYYNLDDRDGYRPIAKIVSRHHAILNFTCLEMRDSEQSSDAHSSPQKLVQQVLSGGWRENIEVAGENALSRYDATAYNQIILNARPQGVNKDGPPKLRMYGVTYLRLSDDLMQQSNFDIFKKFVVKMHADQDYCSDPEKYNHGIPPLKRSGPKIPDDVLNEATKPIPPFPWDSETDMKVDG.

The substrate site is built by Asp54, His94, and Asp102. The Proton donor role is filled by Glu187. Substrate contacts are provided by Lys296, His301, and Thr343. The Proton acceptor role is filled by Glu381. Substrate contacts are provided by residues 382 to 383 and Arg421; that span reads NA. The tract at residues 455-496 is disordered; it reads YNHGIPPLKRSGPKIPDDVLNEATKPIPPFPWDSETDMKVDG.

This sequence belongs to the glycosyl hydrolase 14 family.

It carries out the reaction Hydrolysis of (1-&gt;4)-alpha-D-glucosidic linkages in polysaccharides so as to remove successive maltose units from the non-reducing ends of the chains.. The polypeptide is Beta-amylase (BMY1) (Medicago sativa (Alfalfa)).